The primary structure comprises 384 residues: MPEFEVTPWEVTGVVDYNKLIEEFGTTPLTDDLLKKTEELTKKELPMYFKRKFFFSHRDYDLVLKDYEAGKGFFLYTGRGPSGPMHIGHIIPFFATKWLQENFGVNLYVQITDDEKFLFKPQLTFEGTKRWAYENILDIIAVGFDPDKTFIFQDSEFTKIYEMAIPIAKKVTYSMAKAVFGFNEQSKIGMIFFPAIQAAPTFFEEKRSLIPAAIDQDPYWRIQRDFAESLGYYKTAALHSKFVPGLMGLGGKMSASKPETAIYLTDDPEEAGKKIWKYALTGGRATAKEQRELGGEPDKCVVFKWLEIFFEPDEKKLLERYIACKNGEILCGQCKRYLIEKVQNFLKEHQEKREKAKKEIEKFKYTGDLAREQWDKAIPEPLRK.

Positions 81-89 (PSGPMHIGH) match the 'HIGH' region motif. Positions 252 to 256 (KMSAS) match the 'KMSKS' region motif.

Belongs to the class-I aminoacyl-tRNA synthetase family.

It is found in the cytoplasm. It catalyses the reaction tRNA(Trp) + L-tryptophan + ATP = L-tryptophyl-tRNA(Trp) + AMP + diphosphate + H(+). The polypeptide is Tryptophan--tRNA ligase (Thermococcus sibiricus (strain DSM 12597 / MM 739)).